We begin with the raw amino-acid sequence, 436 residues long: Prenyltransferase nscD (436 aa).

It belongs to the tryptophan dimethylallyltransferase family.

Its pathway is secondary metabolite biosynthesis. Prenyltransferase; part of the gene cluster that mediates the biosynthesis of neosartoricin B, a prenylated anthracenone that probably exhibits T-cell antiproliferative activity, suggestive of a physiological role as an immunosuppressive agent. The non-reducing polyketide synthase nscA probably synthesizes and cyclizes the decaketide backbone. The hydrolase nscB then mediates the product release through hydrolysis followed by spontaneous decarboxylation. The prenyltransferase nscD catalyzes the addition of the dimethylallyl group to the aromatic C5. The FAD-dependent monooxygenase nscC is then responsible for the stereospecific hydroxylation at C2. Neosartoricin B can be converted into two additional compounds neosartoricins C and D. Neosartoricin C is a spirocyclic compound that is cyclized through the attack of C3 hydroxyl on C14, followed by dehydration. On the other hand, neosartoricin D is a further cyclized compound in which attack of C2 on C14 in neosartoricin C results in the formation of the acetal-containing dioxabicyclo-octanone ring. Both of these compounds are novel and possibly represent related metabolites of the gene cluster. This chain is Prenyltransferase nscD, found in Arthroderma gypseum (strain ATCC MYA-4604 / CBS 118893) (Microsporum gypseum).